Here is a 267-residue protein sequence, read N- to C-terminus: L-aspartate dehydrogenase (267 aa).

2 residues coordinate NAD(+): alanine 124 and asparagine 190. Residue histidine 220 is part of the active site.

This sequence belongs to the L-aspartate dehydrogenase family.

It catalyses the reaction L-aspartate + NADP(+) + H2O = oxaloacetate + NH4(+) + NADPH + H(+). The enzyme catalyses L-aspartate + NAD(+) + H2O = oxaloacetate + NH4(+) + NADH + H(+). The protein operates within cofactor biosynthesis; NAD(+) biosynthesis; iminoaspartate from L-aspartate (dehydrogenase route): step 1/1. Specifically catalyzes the NAD or NADP-dependent dehydrogenation of L-aspartate to iminoaspartate. In Pseudomonas aeruginosa (strain ATCC 15692 / DSM 22644 / CIP 104116 / JCM 14847 / LMG 12228 / 1C / PRS 101 / PAO1), this protein is L-aspartate dehydrogenase.